We begin with the raw amino-acid sequence, 784 residues long: DNA ligase (784 aa).

Residues 35–39 (DAEYD), 84–85 (SL), and glutamate 117 contribute to the NAD(+) site. The active-site N6-AMP-lysine intermediate is the lysine 119. NAD(+) is bound by residues arginine 140, glutamate 177, lysine 294, and lysine 318. 4 residues coordinate Zn(2+): cysteine 412, cysteine 415, cysteine 442, and cysteine 448. In terms of domain architecture, BRCT spans 703 to 784 (AEGLPLAGQT…FLALLRQLES (82 aa)).

The protein belongs to the NAD-dependent DNA ligase family. LigA subfamily. It depends on Mg(2+) as a cofactor. The cofactor is Mn(2+).

It carries out the reaction NAD(+) + (deoxyribonucleotide)n-3'-hydroxyl + 5'-phospho-(deoxyribonucleotide)m = (deoxyribonucleotide)n+m + AMP + beta-nicotinamide D-nucleotide.. Its function is as follows. DNA ligase that catalyzes the formation of phosphodiester linkages between 5'-phosphoryl and 3'-hydroxyl groups in double-stranded DNA using NAD as a coenzyme and as the energy source for the reaction. It is essential for DNA replication and repair of damaged DNA. The protein is DNA ligase of Azotobacter vinelandii (strain DJ / ATCC BAA-1303).